Here is an 891-residue protein sequence, read N- to C-terminus: Echinoderm microtubule-associated protein-like elp-1 (891 aa).

Positions 77–88 (DQSRSPTCSGYS) are enriched in polar residues. The tract at residues 77–167 (DQSRSPTCSG…ARGSPMRKWV (91 aa)) is disordered. Over residues 104–117 (SPSHAPPRSSHANS) the composition is skewed to low complexity. Over residues 118–131 (KSLYINGMNNNSEE) the composition is skewed to polar residues. 9 WD repeats span residues 330–401 (GHTC…TLMV), 404–447 (GFEK…REGE), 499–537 (DKPKTVLSMCFGENDQVVTGDSNGTISIWDPRTCKTTKQ), 541–579 (VHPGGVYSLTLAKSGKILSGGKDRMVSEWDLQDLVRTRR), 626–664 (GDPGNLTFLLTCSSNQLITSSQCGTLRIWNHIDKKVEFS), 708–747 (EGTAPITAVKFAPSGATFAVATKDPHLTIYRIDASKNLLV), 753–792 (HIPAPIVALDFSSDSQYLRGQSIGAHLLFWTKAGEICDGT), 816–853 (SSNGQVTAVAQCEDISACGMENGTIRIYKNPVTSVTAG), and 859–890 (GHGRIIKSVAFSNKIQLFSCSPTDNSVFEWCL).

This sequence belongs to the WD repeat EMAP family.

The protein resides in the cytoplasm. It is found in the cytoskeleton. Functionally, may modify the assembly dynamics of microtubules, such that microtubules are slightly longer, but more dynamic. This chain is Echinoderm microtubule-associated protein-like elp-1 (elp-1), found in Caenorhabditis elegans.